Consider the following 445-residue polypeptide: MDKLKFGLVSLGCDKNRVDSEIILGSMNRDYEIVNDPREADVILVNTCGFIESAKQESINTILEMNKYKEKYNCKMLIATGCLTQRYGKELKELVPEIDAILGVNDYKSLDDAIEDFFNLGKKDIYCNYSDQSINEGKRIITTGEYSSYVRISEGCNNSCSYCIIPKIRGKYRSRQFENIIDEVRELSENGTKEVILIAQDTTRYGVDLYGRKRLHELLKEMSLIQGIEWIRIMYCYPEEITEELIEEIASNEKVCNYIDMPIQHISDNILKNMFRKTRKSEILDKVEKIRKKVPNIAIRTSLIVGFPGETEGDFNELCDFVKDANINNLGVFRYSREEGTKAALMPMQIADTVKEKREEDIMLIQQQVSKNLNAKKIGKVYKVIVEGFNGDYWYGRNFEMAPEIDGKVFFKSQSEIKVGSFINIKITENLEYDLIGVVYNEFSK.

The MTTase N-terminal domain maps to 4-119 (LKFGLVSLGC…LDDAIEDFFN (116 aa)). 6 residues coordinate [4Fe-4S] cluster: C13, C48, C82, C156, C160, and C163. Residues 142-372 (TTGEYSSYVR…MLIQQQVSKN (231 aa)) form the Radical SAM core domain. A TRAM domain is found at 375–441 (AKKIGKVYKV…EYDLIGVVYN (67 aa)).

Belongs to the methylthiotransferase family. RimO subfamily. It depends on [4Fe-4S] cluster as a cofactor.

The protein resides in the cytoplasm. It catalyses the reaction L-aspartate(89)-[ribosomal protein uS12]-hydrogen + (sulfur carrier)-SH + AH2 + 2 S-adenosyl-L-methionine = 3-methylsulfanyl-L-aspartate(89)-[ribosomal protein uS12]-hydrogen + (sulfur carrier)-H + 5'-deoxyadenosine + L-methionine + A + S-adenosyl-L-homocysteine + 2 H(+). Functionally, catalyzes the methylthiolation of an aspartic acid residue of ribosomal protein uS12. The protein is Ribosomal protein uS12 methylthiotransferase RimO of Clostridium acetobutylicum (strain ATCC 824 / DSM 792 / JCM 1419 / IAM 19013 / LMG 5710 / NBRC 13948 / NRRL B-527 / VKM B-1787 / 2291 / W).